A 575-amino-acid polypeptide reads, in one-letter code: Putative export ATP-binding/permease protein RBE_0492 (575 aa).

Residues 20 to 303 (LIIVIISLLS…IFELLSEMHL (284 aa)) form the ABC transmembrane type-1 domain. 6 consecutive transmembrane segments (helical) span residues 21 to 41 (IIVIISLLSVSLALLLIGNVF), 61 to 81 (ILYICLLIIILSIASFFRSYF), 135 to 155 (FLSFFIRNSVMLVGSIILMFF), 158 to 178 (FKLASIVIITIPLLLIPIIKF), 242 to 262 (ALFFAFSMAFIFLGVTLVIWI), and 277 to 297 (IISFIYYAIIAGFSSGGIFEL). In terms of domain architecture, ABC transporter spans 336 to 571 (LEFKNVNFSY…SDLYRTIYKE (236 aa)). Residue 371–378 (GRSGSGKS) coordinates ATP.

This sequence belongs to the ABC transporter superfamily. As to quaternary structure, homodimer.

It localises to the cell inner membrane. Its function is as follows. Part of an ABC transporter complex. Transmembrane domains (TMD) form a pore in the inner membrane and the ATP-binding domain (NBD) is responsible for energy generation. The polypeptide is Putative export ATP-binding/permease protein RBE_0492 (Rickettsia bellii (strain RML369-C)).